The sequence spans 1332 residues: Aldehyde oxidase 1 (1332 aa).

One can recognise a 2Fe-2S ferredoxin-type domain in the interval 4–91 (STLYFYVNGR…GAAVTTVEGV (88 aa)). [2Fe-2S] cluster contacts are provided by cysteine 43, cysteine 48, cysteine 51, and cysteine 73. Position 112 (glutamine 112) interacts with Mo-molybdopterin. Positions 113, 116, 148, and 150 each coordinate [2Fe-2S] cluster. Cysteine 150 contacts Mo-molybdopterin. In terms of domain architecture, FAD-binding PCMH-type spans 234–419 (FTGDRVTWIS…LSVTIPYSRK (186 aa)). Residues 262 to 269 (VVMGNTSV), alanine 343, serine 352, histidine 356, aspartate 365, and leucine 409 each bind FAD. Residues 800 to 801 (AF), methionine 1041, 1082 to 1085 (GSVV), glutamine 1197, and leucine 1262 each bind Mo-molybdopterin. The active-site Proton acceptor; for azaheterocycle hydroxylase activity is glutamate 1264.

The protein belongs to the xanthine dehydrogenase family. As to quaternary structure, homodimer. [2Fe-2S] cluster serves as cofactor. FAD is required as a cofactor. The cofactor is Mo-molybdopterin. Expressed in liver.

It is found in the cytoplasm. It carries out the reaction an aldehyde + O2 + H2O = a carboxylate + H2O2 + H(+). It catalyses the reaction retinal + O2 + H2O = retinoate + H2O2 + H(+). Its activity is regulated as follows. Inhibited by menadione and isovanillin. Not inhibited by allopurinol, a xanthine dehydrogenase potent inhibitor. Functionally, oxidase with broad substrate specificity, oxidizing aromatic azaheterocycles, such as N1-methylnicotinamide, N-methylphthalazinium and phthalazine, as well as aldehydes, such as benzaldehyde, retinal, pyridoxal, and vanillin. Plays a key role in the metabolism of xenobiotics and drugs containing aromatic azaheterocyclic substituents. Participates in the bioactivation of prodrugs such as famciclovir, catalyzing the oxidation step from 6-deoxypenciclovir to penciclovir, which is a potent antiviral agent. Is probably involved in the regulation of reactive oxygen species homeostasis. May be a prominent source of superoxide generation via the one-electron reduction of molecular oxygen. May also catalyze nitric oxide (NO) production via the reduction of nitrite to NO with NADH or aldehyde as electron donor. May play a role in adipogenesis. This chain is Aldehyde oxidase 1, found in Cavia porcellus (Guinea pig).